A 230-amino-acid polypeptide reads, in one-letter code: tRNA pseudouridine synthase B (230 aa).

D45 serves as the catalytic Nucleophile.

This sequence belongs to the pseudouridine synthase TruB family. Type 1 subfamily.

It carries out the reaction uridine(55) in tRNA = pseudouridine(55) in tRNA. In terms of biological role, responsible for synthesis of pseudouridine from uracil-55 in the psi GC loop of transfer RNAs. In Endomicrobium trichonymphae, this protein is tRNA pseudouridine synthase B.